Consider the following 244-residue polypeptide: ATP synthase subunit a (244 aa).

5 consecutive transmembrane segments (helical) span residues 17 to 37, 75 to 95, 112 to 132, 170 to 190, and 221 to 241; these read LTNI…AILT, FLAL…LGLP, DPAI…YYGV, LYGN…LATS, and GAIQ…HKIS.

The protein belongs to the ATPase A chain family. In terms of assembly, F-type ATPases have 2 components, CF(1) - the catalytic core - and CF(0) - the membrane proton channel. CF(1) has five subunits: alpha(3), beta(3), gamma(1), delta(1), epsilon(1). CF(0) has three main subunits: a(1), b(2) and c(9-12). The alpha and beta chains form an alternating ring which encloses part of the gamma chain. CF(1) is attached to CF(0) by a central stalk formed by the gamma and epsilon chains, while a peripheral stalk is formed by the delta and b chains. The F(1)F(0) complex interacts with SpoIIIJ and YqjG; YqgA is found in the same complex.

It localises to the cell membrane. In terms of biological role, key component of the proton channel; it plays a direct role in the translocation of protons across the membrane. This is ATP synthase subunit a from Bacillus subtilis (strain 168).